The primary structure comprises 621 residues: pH-response transcription factor pacc-1 (621 aa).

Positions 1 to 14 are enriched in polar residues; the sequence is MSSTPAQENGTVNG. Residues 1-87 form a disordered region; that stretch reads MSSTPAQENG…PTTASNSSAP (87 aa). Residues 15-87 show a composition bias toward low complexity; it reads ANAAPAPAPA…PTTASNSSAP (73 aa). 3 consecutive C2H2-type zinc fingers follow at residues 95 to 120, 131 to 155, and 161 to 183; these read LVCR…CEKH, LTCQ…VRVH, and HKCD…VKTH. Disordered regions lie at residues 395 to 539 and 566 to 621; these read PTYA…PETY and DEDD…PRIN. Low complexity-rich tracts occupy residues 409–423 and 436–465; these read ASLA…PHSA and SYTS…VSYP. Positions 464-467 match the YPX[LI] motif 1 motif; the sequence is YPTL. Positions 476-486 are enriched in polar residues; that stretch reads PSTSGLGSNFT. Basic and acidic residues predominate over residues 502-511; it reads RAADEADRAP. Residues 515–525 are compositionally biased toward polar residues; that stretch reads ASEQATVSSPS. A compositionally biased stretch (low complexity) spans 583 to 595; it reads RNQQQRNQQQQQQ. Residues 614–617 carry the YPX[LI] motif 2 motif; the sequence is YPVL.

It belongs to the pacC/RIM101 family. Binds to DNA. Interacts with palA/prr-1, which binds to the two YPX[LI] motifs and is required for proteolytic processing. Activated by C-terminal proteolytic cleavage by signaling protease (probably palB/RIM13) at neutral to alkaline ambient pH.

The protein localises to the cytoplasm. It is found in the nucleus. In terms of biological role, transcription factor that mediates regulation of both acid- and alkaline-expressed genes in response to ambient pH. At alkaline ambient pH, activates transcription of alkaline-expressed genes (including pacc-1 itself) and represses transcription of acid-expressed genes. In Neurospora crassa (strain ATCC 24698 / 74-OR23-1A / CBS 708.71 / DSM 1257 / FGSC 987), this protein is pH-response transcription factor pacc-1 (pacc-1).